The chain runs to 105 residues: Large ribosomal subunit protein uL24 (105 aa).

This sequence belongs to the universal ribosomal protein uL24 family. As to quaternary structure, part of the 50S ribosomal subunit.

One of two assembly initiator proteins, it binds directly to the 5'-end of the 23S rRNA, where it nucleates assembly of the 50S subunit. Functionally, one of the proteins that surrounds the polypeptide exit tunnel on the outside of the subunit. The polypeptide is Large ribosomal subunit protein uL24 (Methylocella silvestris (strain DSM 15510 / CIP 108128 / LMG 27833 / NCIMB 13906 / BL2)).